The sequence spans 344 residues: tRNA N6-adenosine threonylcarbamoyltransferase (344 aa).

Fe cation is bound by residues histidine 119 and histidine 123. Residues 141-145 (VVSGG), aspartate 174, glycine 187, aspartate 191, and asparagine 280 each bind substrate. Aspartate 310 provides a ligand contact to Fe cation.

Belongs to the KAE1 / TsaD family. Fe(2+) is required as a cofactor.

The protein resides in the cytoplasm. It catalyses the reaction L-threonylcarbamoyladenylate + adenosine(37) in tRNA = N(6)-L-threonylcarbamoyladenosine(37) in tRNA + AMP + H(+). Functionally, required for the formation of a threonylcarbamoyl group on adenosine at position 37 (t(6)A37) in tRNAs that read codons beginning with adenine. Is involved in the transfer of the threonylcarbamoyl moiety of threonylcarbamoyl-AMP (TC-AMP) to the N6 group of A37, together with TsaE and TsaB. TsaD likely plays a direct catalytic role in this reaction. The polypeptide is tRNA N6-adenosine threonylcarbamoyltransferase (Listeria monocytogenes serovar 1/2a (strain ATCC BAA-679 / EGD-e)).